Consider the following 666-residue polypeptide: MTPPPPGRAAPSAPRARVPGPPARLGLPLRLRLLLLLWAAAASAQGHLRSGPRIFAVWKGHVGQDRVDFGQTEPHTVLFHEPGSSSVWVGGRGKVYLFDFPEGKNASVRTVNIGSTKGSCLDKRDCENYITLLERRSEGLLACGTNARHPSCWNLVNGTVVPLGEMRGYAPFSPDENSLVLFEGDEVYSTIRKQEYNGKIPRFRRIRGESELYTSDTVMQNPQFIKATIVHQDQAYDDKIYYFFREDNPDKNPEAPLNVSRVAQLCRGDQGGESSLSVSKWNTFLKAMLVCSDAATNKNFNRLQDVFLLPDPSGQWRDTRVYGVFSNPWNYSAVCVYSLGDIDKVFRTSSLKGYHSSLPNPRPGKCLPDQQPIPTETFQVADRHPEVAQRVEPMGPLKTPLFHSKYHYQKVAVHRMQASHGETFHVLYLTTDRGTIHKVVEPGEQEHSFAFNIMEIQPFRRAAAIQTMSLDAERRKLYVSSQWEVSQVPLDLCEVYGGGCHGCLMSRDPYCGWDQGRCISIYSSERSVLQSINPAEPHKECPNPKPDKAPLQKVSLAPNSRYYLSCPMESRHATYSWRHKENVEQSCEPGHQSPNCILFIENLTAQQYGHYFCEAQEGSYFREAQHWQLLPEDGIMAEHLLGHACALAASLWLGVLPTLTLGLLVH.

The tract at residues Met-1–Pro-21 is disordered. An N-terminal signal peptide occupies residues Met-1–Ala-44. Residues Ala-9 to Pro-21 show a composition bias toward low complexity. Residues Arg-53–Leu-490 enclose the Sema domain. A glycan (N-linked (GlcNAc...) asparagine) is linked at Asn-105. Cys-120 and Cys-126 are disulfide-bonded. Arg-135 carries the asymmetric dimethylarginine modification. Cys-143 and Cys-152 are disulfide-bonded. N-linked (GlcNAc...) asparagine glycosylation is found at Asn-157 and Asn-258. Disulfide bonds link Cys-266–Cys-366, Cys-291–Cys-335, Cys-493–Cys-511, Cys-500–Cys-541, Cys-503–Cys-518, Cys-566–Cys-613, and Cys-587–Cys-596. The interaction with integrins stretch occupies residues Arg-267–Asp-269. Residues Arg-267 to Asp-269 carry the Cell attachment site motif. Residue Asn-330 is glycosylated (N-linked (GlcNAc...) asparagine). In terms of domain architecture, Ig-like C2-type spans Pro-544 to Leu-629. Asn-602 is a glycosylation site (N-linked (GlcNAc...) asparagine). Ala-648 carries GPI-anchor amidated alanine lipidation. The propeptide at Ala-649–His-666 is removed in mature form.

The protein belongs to the semaphorin family. In terms of assembly, interacts with ITGA1 and ITGB1. Interacts with PLXNC1. In terms of tissue distribution, detected in skin keratinocytes and on endothelial cells from skin blood vessels (at protein level). Expressed in fibroblasts, keratinocytes, melanocytes, placenta, testis, ovary, spleen, brain, spinal cord, lung, heart, adrenal gland, lymph nodes, thymus, intestine and kidney.

The protein resides in the cell membrane. Functionally, plays an important role in integrin-mediated signaling and functions both in regulating cell migration and immune responses. Promotes formation of focal adhesion complexes, activation of the protein kinase PTK2/FAK1 and subsequent phosphorylation of MAPK1 and MAPK3. Promotes production of pro-inflammatory cytokines by monocytes and macrophages. Plays an important role in modulating inflammation and T-cell-mediated immune responses. Promotes axon growth in the embryonic olfactory bulb. Promotes attachment, spreading and dendrite outgrowth in melanocytes. The protein is Semaphorin-7A (SEMA7A) of Homo sapiens (Human).